The chain runs to 456 residues: Elongator complex protein 4 (456 aa).

Residues 1–11 (MSFRKRGEILN) show a composition bias toward basic and acidic residues. The disordered stretch occupies residues 1-91 (MSFRKRGEIL…SQPTTSTGSA (91 aa)). Residue Arg-13 is modified to Omega-N-methylarginine. Residues 18 to 27 (RGPLLRGPPR) are compositionally biased toward low complexity. Positions 57-66 (NIADESKTKM) are enriched in basic and acidic residues. Low complexity predominate over residues 77–90 (PSPATSQPTTSTGS). Ser-222 is subject to Phosphoserine. The disordered stretch occupies residues 424-444 (EGSAASEQSHSHSHSDEISHN). A compositionally biased stretch (basic and acidic residues) spans 432–442 (SHSHSHSDEIS).

The protein belongs to the ELP4 family. Component of the elongator complex which consists of ELP1/IKI3, ELP2, ELP3, ELP4, ELP5/IKI1 and ELP6. The elongator complex is composed of two copies of the Elp123 subcomplex (composed of ELP1/IKI3, ELP2 and ELP3) and two copies of the Elp456 subcomplex (composed of ELP4, ELP5/IKI1 and ELP6). The Elp123 subcomplex forms a two-lobed scaffold, which binds the Elp456 subcomplex asymmetrically. In each lobe, ELP2 is tightly sandwiched between ELP1/IKI3 and ELP3. The Elp123 subcomplex binds tRNA through ELP1/IKI3 and ELP3 and can bind 2 tRNAs simultaneously. tRNA-binding by the Elp123 subcomplex induces conformational rearrangements which precisely position the targeted anticodon base in the active site. The Elp456 subcomplex binds tRNA and has ATPase activity. ELP4 interacts with KTI12.

It is found in the cytoplasm. It localises to the nucleus. The protein operates within tRNA modification; 5-methoxycarbonylmethyl-2-thiouridine-tRNA biosynthesis. Functionally, component of the elongator complex, a multiprotein complex which is required for multiple tRNA modifications, including mcm5U (5-methoxycarbonylmethyl uridine), mcm5s2U (5-methoxycarbonylmethyl-2-thiouridine), and ncm5U (5-carbamoylmethyl uridine). The elongator complex catalyzes formation of carboxymethyluridine in the wobble base at position 34 in tRNAs. It functions as a gamma-toxin target (TOT); disruption of the complex confers resistance to Kluyveromyces lactis toxin zymocin (pGKL1 killer toxin). May also be involved in sensitivity to Pichia inositovora toxin. This is Elongator complex protein 4 from Saccharomyces cerevisiae (strain ATCC 204508 / S288c) (Baker's yeast).